Reading from the N-terminus, the 349-residue chain is GDSL esterase/lipase At1g58725 (349 aa).

Positions 1–19 (MKIQILLFALVLIFVEANA) are cleaved as a signal peptide. Asn-25 carries N-linked (GlcNAc...) asparagine glycosylation. The active-site Nucleophile is the Ser-37. Asn-316 carries an N-linked (GlcNAc...) asparagine glycan. Catalysis depends on residues Asp-324 and His-327.

The protein belongs to the 'GDSL' lipolytic enzyme family.

The protein localises to the secreted. The protein is GDSL esterase/lipase At1g58725 of Arabidopsis thaliana (Mouse-ear cress).